The chain runs to 243 residues: Pyridoxine 5'-phosphate synthase (243 aa).

A 3-amino-2-oxopropyl phosphate-binding site is contributed by Asn-9. 11–12 serves as a coordination point for 1-deoxy-D-xylulose 5-phosphate; it reads DH. Arg-20 contributes to the 3-amino-2-oxopropyl phosphate binding site. His-45 acts as the Proton acceptor in catalysis. 2 residues coordinate 1-deoxy-D-xylulose 5-phosphate: Arg-47 and His-52. Residue Glu-72 is the Proton acceptor of the active site. Residue Thr-102 coordinates 1-deoxy-D-xylulose 5-phosphate. The Proton donor role is filled by His-193. 3-amino-2-oxopropyl phosphate is bound by residues Gly-194 and 215–216; that span reads GH.

Belongs to the PNP synthase family. Homooctamer; tetramer of dimers.

The protein localises to the cytoplasm. It carries out the reaction 3-amino-2-oxopropyl phosphate + 1-deoxy-D-xylulose 5-phosphate = pyridoxine 5'-phosphate + phosphate + 2 H2O + H(+). It participates in cofactor biosynthesis; pyridoxine 5'-phosphate biosynthesis; pyridoxine 5'-phosphate from D-erythrose 4-phosphate: step 5/5. Its function is as follows. Catalyzes the complicated ring closure reaction between the two acyclic compounds 1-deoxy-D-xylulose-5-phosphate (DXP) and 3-amino-2-oxopropyl phosphate (1-amino-acetone-3-phosphate or AAP) to form pyridoxine 5'-phosphate (PNP) and inorganic phosphate. In Pectobacterium atrosepticum (strain SCRI 1043 / ATCC BAA-672) (Erwinia carotovora subsp. atroseptica), this protein is Pyridoxine 5'-phosphate synthase.